A 375-amino-acid chain; its full sequence is Glutamate 5-kinase (375 aa).

Residue Lys-13 coordinates ATP. Positions 54, 141, and 153 each coordinate substrate. Residues 173–174 (TD) and 216–222 (TGGMATK) contribute to the ATP site. Residues 281–359 (TGKIFIDAGA…EAIAAVLGYV (79 aa)) enclose the PUA domain.

It belongs to the glutamate 5-kinase family.

It is found in the cytoplasm. The enzyme catalyses L-glutamate + ATP = L-glutamyl 5-phosphate + ADP. The protein operates within amino-acid biosynthesis; L-proline biosynthesis; L-glutamate 5-semialdehyde from L-glutamate: step 1/2. Its function is as follows. Catalyzes the transfer of a phosphate group to glutamate to form L-glutamate 5-phosphate. In Synechocystis sp. (strain ATCC 27184 / PCC 6803 / Kazusa), this protein is Glutamate 5-kinase.